We begin with the raw amino-acid sequence, 422 residues long: Serine protease HTRA2, mitochondrial (422 aa).

The N-terminal 17 residues, 1–17, are a transit peptide targeting the mitochondrion; the sequence is MALRGSHRLEVIFKRCI. The propeptide occupies 18–74; sequence ASPVLHSQAGNRRSSQLAIKGVDPNSNGNSGQYQQNGEHKEKGWRRLVRFFVPFSLG. A disordered region spans residues 28-55; the sequence is NRRSSQLAIKGVDPNSNGNSGQYQQNGE. Positions 42–53 are enriched in low complexity; that stretch reads NSNGNSGQYQQN. A helical transmembrane segment spans residues 64 to 82; it reads LVRFFVPFSLGAAVSAAII. 2 consecutive short sequence motifs (IAP-binding) follow at residues 75–78 and 94–97; these read AAVS and SKMT. The interval 139–302 is serine protease; that stretch reads SNGSGFIIEQ…IPIDYVKVFL (164 aa). Active-site charge relay system residues include His157, Asp189, and Ser266. Residues 325-410 form the PDZ domain; it reads MGITMLTLTP…TLDIVILRGV (86 aa).

It belongs to the peptidase S1C family. In terms of assembly, interacts with th/DIAP1 (via BIR 2 domain).

The protein localises to the mitochondrion intermembrane space. It is found in the mitochondrion membrane. The enzyme catalyses Cleavage of non-polar aliphatic amino-acids at the P1 position, with a preference for Val, Ile and Met. At the P2 and P3 positions, Arg is selected most strongly with a secondary preference for other hydrophilic residues.. Serine protease that shows proteolytic activity against a non-specific substrate beta-casein. Promotes or induces cell death either by direct binding to and inhibition of BIRC proteins (also called inhibitor of apoptosis proteins, IAPs), leading to an increase in caspase activity, or by a BIRC inhibition-independent, caspase-independent and serine protease activity-dependent mechanism. Can antagonize antiapoptotic activity of th/Diap1 by directly inducing the degradation of th/Diap1. This Drosophila sechellia (Fruit fly) protein is Serine protease HTRA2, mitochondrial.